We begin with the raw amino-acid sequence, 586 residues long: Glutathione S-transferase C-terminal domain-containing protein homolog (586 aa).

In terms of domain architecture, GST C-terminal spans leucine 121 to leucine 276.

The protein belongs to the GSTCD family.

The polypeptide is Glutathione S-transferase C-terminal domain-containing protein homolog (Drosophila pseudoobscura pseudoobscura (Fruit fly)).